A 670-amino-acid polypeptide reads, in one-letter code: DNA topoisomerase 6 subunit B (670 aa).

A disordered region spans residues 1–30; that stretch reads MAGDDLVETKKGSSKNSKDSNESKLKQKSP. A compositionally biased stretch (basic and acidic residues) spans 7–25; the sequence is VETKKGSSKNSKDSNESKL. ATP contacts are provided by residues asparagine 60, aspartate 160, 181-182, 190-197, and lysine 516; these read TK and GKFGLGAK.

This sequence belongs to the TOP6B family. In terms of assembly, homodimer. Heterotetramer of two TOP6A and two TOP6B subunits. Interacts with SPO11-2, but not with SPO11-1, RHL1 or BIN4. In terms of tissue distribution, highly expressed in leaves, stems, flowers and seedlings.

It is found in the nucleus. It catalyses the reaction ATP-dependent breakage, passage and rejoining of double-stranded DNA.. Component of the DNA topoisomerase VI involved in chromatin organization and progression of endoreduplication cycles. Relaxes both positive and negative superturns and exhibits a strong decatenase activity. The B subunit binds ATP. Involved in cell-elongation processes. The chain is DNA topoisomerase 6 subunit B from Arabidopsis thaliana (Mouse-ear cress).